The following is a 247-amino-acid chain: Ferredoxin:CoB-CoM heterodisulfide reductase subunit C (247 aa).

The 31-residue stretch at 32–62 (TPESLGLDRCIQCGACTASCPAARFTDYSPR) folds into the 4Fe-4S ferredoxin-type domain. 8 residues coordinate [4Fe-4S] cluster: Cys41, Cys44, Cys47, Cys51, Cys84, Cys87, Cys90, and Cys94. A compositionally biased stretch (basic and acidic residues) spans 216-240 (RTGTSCTEKKKNSGDLGFESDREYT). The tract at residues 216-247 (RTGTSCTEKKKNSGDLGFESDREYTGQEALTV) is disordered.

Belongs to the HdrC family. In terms of assembly, the ferredoxin:CoB-CoM heterodisulfide reductase is composed of three subunits; HdrA1, HdrB1 and HdrC1. Requires [4Fe-4S] cluster as cofactor.

It localises to the cytoplasm. The enzyme catalyses coenzyme B + coenzyme M + 2 oxidized [2Fe-2S]-[ferredoxin] = coenzyme M-coenzyme B heterodisulfide + 2 reduced [2Fe-2S]-[ferredoxin] + 2 H(+). The protein operates within cofactor metabolism; coenzyme M-coenzyme B heterodisulfide reduction; coenzyme B and coenzyme M from coenzyme M-coenzyme B heterodisulfide: step 1/1. Functionally, part of a complex that catalyzes the reversible reduction of CoM-S-S-CoB to the thiol-coenzymes H-S-CoM (coenzyme M) and H-S-CoB (coenzyme B). Probably involved in methylotrophic methanogenesis but not in aceticlastic methanogenesis. This chain is Ferredoxin:CoB-CoM heterodisulfide reductase subunit C, found in Methanosarcina acetivorans (strain ATCC 35395 / DSM 2834 / JCM 12185 / C2A).